Reading from the N-terminus, the 233-residue chain is Demethylmenaquinone methyltransferase (233 aa).

S-adenosyl-L-methionine is bound by residues threonine 58, aspartate 79, and 106–107 (NA).

The protein belongs to the class I-like SAM-binding methyltransferase superfamily. MenG/UbiE family.

The catalysed reaction is a 2-demethylmenaquinol + S-adenosyl-L-methionine = a menaquinol + S-adenosyl-L-homocysteine + H(+). Its pathway is quinol/quinone metabolism; menaquinone biosynthesis; menaquinol from 1,4-dihydroxy-2-naphthoate: step 2/2. Its function is as follows. Methyltransferase required for the conversion of demethylmenaquinol (DMKH2) to menaquinol (MKH2). The sequence is that of Demethylmenaquinone methyltransferase from Bacillus subtilis (strain 168).